Consider the following 329-residue polypeptide: Apolipoprotein E (329 aa).

The signal sequence occupies residues 1 to 18; sequence MKVLWAALVVALLAGCWA. Repeat copies occupy residues 92–113, 114–135, 136–157, 158–179, 180–201, 202–223, 224–245, and 246–267. Positions 92–267 are 8 X 22 AA approximate tandem repeats; that stretch reads TLMEETMKEI…HLDEVREQME (176 aa). Met-155 is modified (methionine sulfoxide). Residue Ser-159 is modified to Phosphoserine. The segment at 170-180 is LDL and other lipoprotein receptors binding; sequence HMRKLRKRVLR. A heparin-binding site is contributed by 174–177; that stretch reads LRKR. A lipid-binding and lipoprotein association region spans residues 222 to 302; that stretch reads HAKVDALATQ…GWFEPLVEDM (81 aa). Residue 241–248 participates in heparin binding; that stretch reads GQQLRGRL. The interval 278 to 329 is homooligomerization; it reads NQMRQQAEPFQARLKGWFEPLVEDMQRQWAVLVEKVQAAVGTSPTTPPVETK. The tract at residues 290–302 is specificity for association with VLDL; that stretch reads RLKGWFEPLVEDM.

It belongs to the apolipoprotein A1/A4/E family. As to quaternary structure, homotetramer. May interact with ABCA1; functionally associated with ABCA1 in the biogenesis of HDLs. May interact with APP/A4 amyloid-beta peptide; the interaction is extremely stable in vitro but its physiological significance is unclear. May interact with MAPT. May interact with MAP2. In the cerebrospinal fluid, interacts with secreted SORL1. Interacts with PMEL; this allows the loading of PMEL luminal fragment on ILVs to induce fibril nucleation. APOE exists as multiple glycosylated and sialylated glycoforms within cells and in plasma. The extent of glycosylation and sialylation are tissue and context specific. In terms of processing, glycated in plasma VLDL. Post-translationally, phosphorylated by FAM20C in the extracellular medium.

Its subcellular location is the secreted. It is found in the extracellular space. The protein resides in the extracellular matrix. The protein localises to the extracellular vesicle. It localises to the endosome. Its subcellular location is the multivesicular body. APOE is an apolipoprotein, a protein associating with lipid particles, that mainly functions in lipoprotein-mediated lipid transport between organs via the plasma and interstitial fluids. APOE is a core component of plasma lipoproteins and is involved in their production, conversion and clearance. Apolipoproteins are amphipathic molecules that interact both with lipids of the lipoprotein particle core and the aqueous environment of the plasma. As such, APOE associates with chylomicrons, chylomicron remnants, very low density lipoproteins (VLDL) and intermediate density lipoproteins (IDL) but shows a preferential binding to high-density lipoproteins (HDL). It also binds a wide range of cellular receptors including the LDL receptor/LDLR, the LDL receptor-related proteins LRP1, LRP2 and LRP8 and the very low-density lipoprotein receptor/VLDLR that mediate the cellular uptake of the APOE-containing lipoprotein particles. Finally, APOE also has a heparin-binding activity and binds heparan-sulfate proteoglycans on the surface of cells, a property that supports the capture and the receptor-mediated uptake of APOE-containing lipoproteins by cells. A main function of APOE is to mediate lipoprotein clearance through the uptake of chylomicrons, VLDLs, and HDLs by hepatocytes. APOE is also involved in the biosynthesis by the liver of VLDLs as well as their uptake by peripheral tissues ensuring the delivery of triglycerides and energy storage in muscle, heart and adipose tissues. By participating in the lipoprotein-mediated distribution of lipids among tissues, APOE plays a critical role in plasma and tissues lipid homeostasis. APOE is also involved in two steps of reverse cholesterol transport, the HDLs-mediated transport of cholesterol from peripheral tissues to the liver, and thereby plays an important role in cholesterol homeostasis. First, it is functionally associated with ABCA1 in the biogenesis of HDLs in tissues. Second, it is enriched in circulating HDLs and mediates their uptake by hepatocytes. APOE also plays an important role in lipid transport in the central nervous system, regulating neuron survival and sprouting. The chain is Apolipoprotein E (APOE) from Arctocephalus gazella (Antarctic fur seal).